The following is a 131-amino-acid chain: Small ribosomal subunit protein uS12 (131 aa).

The interval 1–32 is disordered; that stretch reads MPTFSQLVRKGRTAPRYKTASPALQGSPQRRG. 3-methylthioaspartic acid is present on D89. Positions 110 to 131 are disordered; sequence RKQGRSKYGAKRAKGGAAAGKK. A compositionally biased stretch (basic residues) spans 111–131; it reads KQGRSKYGAKRAKGGAAAGKK.

Belongs to the universal ribosomal protein uS12 family. In terms of assembly, part of the 30S ribosomal subunit. Contacts proteins S8 and S17. May interact with IF1 in the 30S initiation complex.

In terms of biological role, with S4 and S5 plays an important role in translational accuracy. Functionally, interacts with and stabilizes bases of the 16S rRNA that are involved in tRNA selection in the A site and with the mRNA backbone. Located at the interface of the 30S and 50S subunits, it traverses the body of the 30S subunit contacting proteins on the other side and probably holding the rRNA structure together. The combined cluster of proteins S8, S12 and S17 appears to hold together the shoulder and platform of the 30S subunit. This Acidobacterium capsulatum (strain ATCC 51196 / DSM 11244 / BCRC 80197 / JCM 7670 / NBRC 15755 / NCIMB 13165 / 161) protein is Small ribosomal subunit protein uS12.